Consider the following 145-residue polypeptide: 3-dehydroquinate dehydratase (145 aa).

Tyr22 (proton acceptor) is an active-site residue. Substrate is bound by residues Asn71, His77, and Asp84. The active-site Proton donor is the His97. Substrate-binding positions include 98 to 99 (IS) and Arg108.

It belongs to the type-II 3-dehydroquinase family. Homododecamer.

The catalysed reaction is 3-dehydroquinate = 3-dehydroshikimate + H2O. The protein operates within metabolic intermediate biosynthesis; chorismate biosynthesis; chorismate from D-erythrose 4-phosphate and phosphoenolpyruvate: step 3/7. In terms of biological role, catalyzes a trans-dehydration via an enolate intermediate. The polypeptide is 3-dehydroquinate dehydratase (Exiguobacterium sp. (strain ATCC BAA-1283 / AT1b)).